A 221-amino-acid chain; its full sequence is Ubiquitin-conjugating enzyme E2 S (221 aa).

Residues 11-157 (QVLRLVYKEV…AHLLTEIHAM (147 aa)) form the UBC core domain. Residue Cys-95 is the Glycyl thioester intermediate of the active site. A disordered region spans residues 158 to 221 (GGTSGAPQEP…TDKKRALRRL (64 aa)). Positions 193-206 (GTGTNNSNISNTNI) are enriched in low complexity. Residues 208-221 (AKKKTDKKRALRRL) show a composition bias toward basic residues.

Belongs to the ubiquitin-conjugating enzyme family.

The catalysed reaction is S-ubiquitinyl-[E1 ubiquitin-activating enzyme]-L-cysteine + [E2 ubiquitin-conjugating enzyme]-L-cysteine = [E1 ubiquitin-activating enzyme]-L-cysteine + S-ubiquitinyl-[E2 ubiquitin-conjugating enzyme]-L-cysteine.. The protein operates within protein modification; protein ubiquitination. Functionally, catalyzes the covalent attachment of ubiquitin to other proteins. Acts as an essential factor of the anaphase promoting complex/cyclosome (APC/C), a cell cycle-regulated ubiquitin ligase that controls progression through mitosis. Acts by specifically elongating 'Lys-11'-linked polyubiquitin chains initiated by the E2 enzyme ube2c/ubch10 on APC/C substrates, enhancing the degradation of APC/C substrates by the proteasome and promoting mitotic exit. The polypeptide is Ubiquitin-conjugating enzyme E2 S (ube2s) (Danio rerio (Zebrafish)).